Consider the following 87-residue polypeptide: UPF0250 protein ECA1299 (87 aa).

This sequence belongs to the UPF0250 family.

The polypeptide is UPF0250 protein ECA1299 (Pectobacterium atrosepticum (strain SCRI 1043 / ATCC BAA-672) (Erwinia carotovora subsp. atroseptica)).